The chain runs to 372 residues: Y-box-binding protein 3 (372 aa).

Residues 1–82 (MSEAGEATTT…LATAAGSEDA (82 aa)) form a disordered region. An N-acetylserine modification is found at Ser2. A Phosphoserine modification is found at Ser2. Low complexity predominate over residues 7-28 (ATTTTTTTLPQAPTEAAAAAPQ). A Phosphoserine modification is found at Ser34. Positions 35–79 (PVGSGAPQAAAPAPAAHVAGNPGGDAAPAATGTAAAASLATAAGS) are enriched in low complexity. The CSD domain maps to 93–157 (GTVKWFNVRN…GEKGAEAANV (65 aa)). A phosphoserine mark is found at Ser134, Ser201, Ser203, and Ser204. The segment at 181-372 (YYGRRRGPPR…APPTQQSSAE (192 aa)) is disordered. Residues 222 to 238 (QLRRPQYRPQYRQRRFP) are compositionally biased toward basic residues. Omega-N-methylarginine is present on Arg251. Positions 314-324 (QQATSGPNQPS) are enriched in polar residues. Ser324 bears the Phosphoserine mark. Arg326 carries the post-translational modification Omega-N-methylarginine. A compositionally biased stretch (basic residues) spans 327-340 (RGYRRPYNYRRRPR). Ser346, Ser369, and Ser370 each carry phosphoserine.

In terms of assembly, found in a mRNP complex with YBX2. Interacts with RRP1B. In terms of tissue distribution, highly expressed in skeletal muscle and heart.

The protein localises to the cytoplasm. It is found in the nucleus. Binds to the GM-CSF promoter. Seems to act as a repressor. Also binds to full-length mRNA and to short RNA sequences containing the consensus site 5'-UCCAUCA-3'. May have a role in translation repression. This is Y-box-binding protein 3 (YBX3) from Homo sapiens (Human).